A 248-amino-acid chain; its full sequence is tRNA (guanine-N(1)-)-methyltransferase (248 aa).

S-adenosyl-L-methionine contacts are provided by residues glycine 117 and 137–142 (LGDFVL).

It belongs to the RNA methyltransferase TrmD family. As to quaternary structure, homodimer.

Its subcellular location is the cytoplasm. The catalysed reaction is guanosine(37) in tRNA + S-adenosyl-L-methionine = N(1)-methylguanosine(37) in tRNA + S-adenosyl-L-homocysteine + H(+). Functionally, specifically methylates guanosine-37 in various tRNAs. In Herminiimonas arsenicoxydans, this protein is tRNA (guanine-N(1)-)-methyltransferase.